The primary structure comprises 135 residues: Mediator of RNA polymerase II transcription subunit 10 (135 aa).

Belongs to the Mediator complex subunit 10 family. Component of the Mediator complex, which is composed of MED1, MED4, MED6, MED7, MED8, MED9, MED10, MED11, MED12, MED13, MED13L, MED14, MED15, MED16, MED17, MED18, MED19, MED20, MED21, MED22, MED23, MED24, MED25, MED26, MED27, MED29, MED30, MED31, CCNC, CDK8 and CDC2L6/CDK11. The MED12, MED13, CCNC and CDK8 subunits form a distinct module termed the CDK8 module. Mediator containing the CDK8 module is less active than Mediator lacking this module in supporting transcriptional activation. Individual preparations of the Mediator complex lacking one or more distinct subunits have been variously termed ARC, CRSP, DRIP, PC2, SMCC and TRAP.

It is found in the nucleus. Its function is as follows. Component of the Mediator complex, a coactivator involved in the regulated transcription of nearly all RNA polymerase II-dependent genes. Mediator functions as a bridge to convey information from gene-specific regulatory proteins to the basal RNA polymerase II transcription machinery. Mediator is recruited to promoters by direct interactions with regulatory proteins and serves as a scaffold for the assembly of a functional preinitiation complex with RNA polymerase II and the general transcription factors. This Macaca fascicularis (Crab-eating macaque) protein is Mediator of RNA polymerase II transcription subunit 10 (MED10).